The sequence spans 459 residues: Argininosuccinate lyase (459 aa).

Belongs to the lyase 1 family. Argininosuccinate lyase subfamily.

Its subcellular location is the cytoplasm. It catalyses the reaction 2-(N(omega)-L-arginino)succinate = fumarate + L-arginine. Its pathway is amino-acid biosynthesis; L-arginine biosynthesis; L-arginine from L-ornithine and carbamoyl phosphate: step 3/3. The polypeptide is Argininosuccinate lyase (Staphylococcus aureus (strain bovine RF122 / ET3-1)).